Consider the following 267-residue polypeptide: CD82 antigen (267 aa).

Residues 1-11 lie on the Cytoplasmic side of the membrane; that stretch reads MGSACIKVTKY. A lipid anchor (S-palmitoyl cysteine) is attached at C5. Residues 12 to 32 form a helical membrane-spanning segment; sequence FLFLFNLIFFILGAVILGFGV. Residues 33–53 lie on the Extracellular side of the membrane; sequence WILADKSSFISVLQTSSSSLR. Residues 54 to 72 traverse the membrane as a helical segment; that stretch reads MGAYVFIGVGAVTMLMGFL. Over 73-83 the chain is Cytoplasmic; it reads GCIGAVNEVRC. Residue C74 is the site of S-palmitoyl cysteine attachment. The chain crosses the membrane as a helical span at residues 84-110; that stretch reads LLGLYFAFLLLILIAQVTAGALFYFNM. The Extracellular portion of the chain corresponds to 111-228; the sequence is GKLKQEMGGI…KVQAWLQENL (118 aa). N-linked (GlcNAc...) asparagine glycosylation is found at N129, N157, and N198. The chain crosses the membrane as a helical span at residues 229-250; the sequence is GIILGVGVGVAIIELLGMVLSI. Topologically, residues 251–267 are cytoplasmic; sequence CLCRHVHSEDYSKVPKY.

This sequence belongs to the tetraspanin (TM4SF) family. As to quaternary structure, forms homooligomers. Interacts directly with IGSF8. Interacts with EGFR. Interacts with VEGFA and PDGFB. Interacts with ITGA4. Interacts with ITGA6; this interaction reduces ITGA6 cell surface expression. Interacts with ITGB1. Interacts with TLR4; this interaction inhibits TLR4-mediated signaling pathway. Interacts with TLR9. Interacts with PLAUR. Post-translationally, palmitoylated. Palmitoylation contributes to oligomerization and surface expression. In terms of tissue distribution, lymphoid specific.

The protein localises to the cell membrane. It localises to the cytoplasmic vesicle. The protein resides in the phagosome. In terms of biological role, structural component of specialized membrane microdomains known as tetraspanin-enriched microdomains (TERMs), which act as platforms for receptor clustering and signaling. Participates thereby in diverse biological functions such as cell signal transduction, adhesion, migration and protein trafficking. Acts as a attenuator of EGF signaling, facilitating ligand-induced endocytosis of the receptor and its subsequent desensitization. Mechanistically, modulates ligand-induced ubiquitination and trafficking of EGFR via E3 ligase CBL phosphorylation by PKC. Increases cell-matrix adhesion by regulating the membrane organization of integrin alpha4/ITA4. Modulates adhesion and suppresses cell migration through other integrins such as the alpha6/ITGA6 and beta1/ITGB1. Decreases cell-associated plasminogen activation by interfering with the interaction between urokinase-type plasminogen activator/PLAU and its receptor PLAUR. Associates with CD4 or CD8 and delivers costimulatory signals for the TCR/CD3 pathway. Plays a role in TLR9 trafficking to acidified CpG-containing compartments by controlling interaction between TLR9 and VAMP3 and subsequent myddosome assembly. Inhibits LPS-induced inflammatory response by preventing binding of LPS to TLR4 on the cell surface. Plays a role in the activation of macrophages into anti-inflammatory phenotypes. Independently of Toll-like receptor (TLR) signaling, is recruited to pathogen-containing phagosomes prior to fusion with lysosomes and thereby participates in antigen presentation. Also acts to control angiogenesis and switch angiogenic milieu to quiescent state by binding and sequestering VEGFA and PDGFB to inhibit the signaling they trigger via their respective cell surface receptor. This is CD82 antigen (CD82) from Homo sapiens (Human).